Reading from the N-terminus, the 346-residue chain is Nitrilase 3 (346 aa).

An N-acetylserine modification is found at S2. Residues 25-297 (VRVTIVQSST…EGLVTADLDL (273 aa)) form the CN hydrolase domain. The active-site Proton acceptor is the E65. The Proton donor role is filled by K152. The Nucleophile role is filled by C186.

The protein belongs to the carbon-nitrogen hydrolase superfamily. Nitrilase family.

The protein localises to the cell membrane. It carries out the reaction a nitrile + 2 H2O = a carboxylate + NH4(+). Functionally, can convert indole-3-acetonitrile to the plant hormone indole-3-acetic acid. In Arabidopsis thaliana (Mouse-ear cress), this protein is Nitrilase 3 (NIT3).